We begin with the raw amino-acid sequence, 142 residues long: Hemoglobin subunit alpha-2 (142 aa).

An N-acetylserine modification is found at Ser1. The Globin domain occupies 1–142; it reads SLSTKDKETV…LSRALSEKYR (142 aa). An O2-binding site is contributed by His59. Residue His88 coordinates heme b.

This sequence belongs to the globin family. As to quaternary structure, hb2 is a heterotetramer of two alpha-2 chains and two beta chains. Red blood cells.

Involved in oxygen transport from gills to the various peripheral tissues. The polypeptide is Hemoglobin subunit alpha-2 (hba2) (Trematomus newnesi (Dusky notothen)).